A 385-amino-acid chain; its full sequence is MSWQQRVDDALTARRATDTLRRRYVVSQGAGRWLVANGRQYLNFSSNDYLGLSQHPQIIRAWQQAATRFGVGSGGSGHISGYSVAHQALEVELAQWLEYPRALLFISGFAANQAVITALMKKNDRIVADRLSHASLLEAANLSPAQLRRFIHNDTQHLSRLLQSPCVGQQLVVTEGVYSMDGDSAPLAEIQHIARRHHAWLLVDDAHGIGVTGDEGRGTCWQRGVKPELLVVTFGKGFGVSGAAVLCSESVADYLLQFARHLVYSTSMPPAQAQALSASLAVIRSDEGRERREKLAALVQRFRAGVNASRFTLLNAHSAIQPLIVGDNSRALRLAEALRQQGCWATAIRPPTVPVGTARLRLTLTQAHEACDIDRLLEVLHGAGE.

Residue Arg-21 coordinates substrate. Residue 108–109 (GF) coordinates pyridoxal 5'-phosphate. His-133 contributes to the substrate binding site. Pyridoxal 5'-phosphate-binding residues include Ser-179, His-207, and Thr-233. An N6-(pyridoxal phosphate)lysine modification is found at Lys-236. Thr-352 lines the substrate pocket.

This sequence belongs to the class-II pyridoxal-phosphate-dependent aminotransferase family. BioF subfamily. As to quaternary structure, homodimer. Requires pyridoxal 5'-phosphate as cofactor.

It carries out the reaction 6-carboxyhexanoyl-[ACP] + L-alanine + H(+) = (8S)-8-amino-7-oxononanoate + holo-[ACP] + CO2. Its pathway is cofactor biosynthesis; biotin biosynthesis. Catalyzes the decarboxylative condensation of pimeloyl-[acyl-carrier protein] and L-alanine to produce 8-amino-7-oxononanoate (AON), [acyl-carrier protein], and carbon dioxide. This is 8-amino-7-oxononanoate synthase from Salmonella newport (strain SL254).